The chain runs to 138 residues: MANPELLEEQREETRLIIEELLEDGSDPDALYTIEHHLSADDFETLEKAAVEAFKLGYEVTEPEELEVEEGDTVICCDILSECALNAELIDAQVEQLMNLAEKYDVEYDGWGTYFEDPNGEEGDDDDYVDEDDDGVRH.

The tract at residues 111–138 (WGTYFEDPNGEEGDDDDYVDEDDDGVRH) is disordered. The span at 118 to 138 (PNGEEGDDDDYVDEDDDGVRH) shows a compositional bias: acidic residues.

It belongs to the RraB family. Interacts with the C-terminal region of Rne.

The protein resides in the cytoplasm. Functionally, globally modulates RNA abundance by binding to RNase E (Rne) and regulating its endonucleolytic activity. Can modulate Rne action in a substrate-dependent manner by altering the composition of the degradosome. This Salmonella typhi protein is Regulator of ribonuclease activity B.